Reading from the N-terminus, the 529-residue chain is Heat shock factor protein 1 (529 aa).

Position 1 is an N-acetylmethionine (M1). The segment at 15–120 is DNA-binding domain; that stretch reads VPAFLTKLWT…LLENIKRKVT (106 aa). K80 is modified (N6-acetyllysine). N6-acetyllysine; alternate is present on K91. K91 is covalently cross-linked (Glycyl lysine isopeptide (Lys-Gly) (interchain with G-Cter in SUMO2); alternate). K118 carries the N6-acetyllysine modification. The residue at position 121 (S121) is a Phosphoserine; by MAPKAPK2. Glycyl lysine isopeptide (Lys-Gly) (interchain with G-Cter in SUMO2) cross-links involve residues K126 and K131. Residues 130 to 203 form a hydrophobic repeat HR-A/B region; it reads IKIRQDSVTK…ISLVQSNRIL (74 aa). The residue at position 142 (T142) is a Phosphothreonine; by CK2. K150 and K188 each carry N6-acetyllysine. Positions 203-224 are d domain; that stretch reads LGVKRKIPLMLNDSGSAHSMPK. An N6-acetyllysine; alternate modification is found at K208. K208 is covalently cross-linked (Glycyl lysine isopeptide (Lys-Gly) (interchain with G-Cter in SUMO2); alternate). S216 bears the Phosphoserine; by PLK1 mark. The regulatory domain stretch occupies residues 221-310; it reads SMPKYSRQFS…PPSPPQSPRV (90 aa). K224 is covalently cross-linked (Glycyl lysine isopeptide (Lys-Gly) (interchain with G-Cter in SUMO2)). S230 is modified (phosphoserine; by CAMK2A). A phosphoserine mark is found at S275 and S292. Positions 295 to 324 are disordered; it reads VRVKEEPPSPPQSPRVEEASPGRPSSVDTL. K298 carries the post-translational modification N6-acetyllysine; alternate. A Glycyl lysine isopeptide (Lys-Gly) (interchain with G-Cter in SUMO2); alternate cross-link involves residue K298. K298 participates in a covalent cross-link: Glycyl lysine isopeptide (Lys-Gly) (interchain with G-Cter in SUMO); alternate. S303 is subject to Phosphoserine; by GSK3-beta. S307 carries the phosphoserine; by MAPK3 modification. Phosphoserine is present on residues S314 and S319. S320 bears the Phosphoserine; by PKA mark. Residue T323 is modified to Phosphothreonine. Residue S326 is modified to Phosphoserine; by MAPK12. The disordered stretch occupies residues 336–372; that stretch reads RESEPAPASVTALTDARGHTDTEGRPPSPPPTSTPEK. S344 carries the post-translational modification Phosphoserine. The residue at position 363 (S363) is a Phosphoserine; by MAPK8. The segment at 371 to 529 is transactivation domain; sequence EKCLSVACLD…PPKAKDPTVS (159 aa). The interval 384 to 409 is hydrophobic repeat HR-C; the sequence is LSDHLDAMDSNLDNLQTMLSSHGFSV. The 9aaTAD signature appears at 412–420; sequence SALLDLFSP. Phosphoserine; by PLK1 is present on S419. S444 bears the Phosphoserine mark. 2 disordered regions span residues 444 to 463 and 502 to 529; these read SPQE…DSGK and EGDG…PTVS. The residue at position 524 (K524) is an N6-acetyllysine.

This sequence belongs to the HSF family. Monomer; cytoplasmic latent and transcriptionally inactive monomeric form in unstressed cells. Homotrimer; in response to stress, such as heat shock, homotrimerizes and translocates into the nucleus, binds to heat shock element (HSE) sequences in promoter of heat shock protein (HSP) genes and acquires transcriptional ability. Interacts (via monomeric form) with FKBP4; this interaction occurs in unstressed cells. Associates (via monomeric form) with HSP90 proteins in a multichaperone complex in unnstressed cell; this association maintains HSF1 in a non-DNA-binding and transcriptional inactive form by preventing HSF1 homotrimerization. Homotrimeric transactivation activity is modulated by protein-protein interactions and post-translational modifications. Interacts with HSP90AA1; this interaction is decreased in a IER5-dependent manner, promoting HSF1 accumulation in the nucleus, homotrimerization and DNA-binding activities. Part (via regulatory domain in the homotrimeric form) of a large heat shock-induced HSP90-dependent multichaperone complex at least composed of FKBP4, FKBP5, HSP90 proteins, PPID, PPP5C and PTGES3; this association maintains the HSF1 homotrimeric DNA-bound form in a transcriptionally inactive form. Interacts with BAG3 (via BAG domain); this interaction occurs in normal and heat-shocked cells promoting nuclear shuttling of HSF1 in a BAG3-dependent manner. Interacts (via homotrimeric and hyperphosphorylated form) with FKBP4; this interaction occurs upon heat shock in a HSP90-dependent multichaperone complex. Interacts (via homotrimeric form preferentially) with EEF1A proteins. In heat shocked cells, stress-denatured proteins compete with HSF1 homotrimeric DNA-bound form for association of the HSP90-dependent multichaperone complex, and hence alleviating repression of HSF1-mediated transcriptional activity. Interacts (via homotrimeric form preferentially) with DAXX; this interaction relieves homotrimeric HSF1 from repression of its transcriptional activity by HSP90-dependent multichaperone complex upon heat shock. Interacts (via D domain and preferentially with hyperphosphorylated form) with JNK1; this interaction occurs under both normal growth conditions and immediately upon heat shock. Interacts (via D domain and preferentially with hyperphosphorylated form) with MAPK3; this interaction occurs upon heat shock. Interacts with IER5 (via central region); this interaction promotes PPP2CA-induced dephosphorylation on Ser-121, Ser-307, Ser-314, Thr-323 and Thr-367 and HSF1 transactivation activity. Found in a ribonucleoprotein complex composed of the HSF1 homotrimeric form, translation elongation factor eEF1A proteins and non-coding RNA heat shock RNA-1 (HSR1); this complex occurs upon heat shock and stimulates HSF1 DNA-binding activity. Interacts (via transactivation domain) with HSPA1A/HSP70 and DNAJB1; these interactions result in the inhibition of heat shock- and HSF1-induced transcriptional activity during the attenuation and recovery phase from heat shock. Interacts (via Ser-303 and Ser-307 phosphorylated form) with YWHAE; this interaction promotes HSF1 sequestration in the cytoplasm in an ERK-dependent manner. Found in a complex with IER5 and PPP2CA. Interacts with TPR; this interaction increases upon heat shock and stimulates export of HSP70 mRNA. Interacts with SYMPK (via N-terminus) and CSTF2; these interactions occur upon heat shock. Interacts (via transactivation domain) with HSPA8. Interacts with EEF1D; this interaction occurs at heat shock promoter element (HSE) sequences. Interacts with MAPKAPK2. Interacts with PRKACA/PKA. Interacts (via transactivation domain) with GTF2A2. Interacts (via transactivation domain) with GTF2B. Interacts (via transactivation domain) with TBP. Interacts with CDK9, CCNT1 and EP300. Interacts (via N-terminus) with XRCC5 (via N-terminus) and XRCC6 (via N-terminus); these interactions are direct and prevent XRCC5/XRCC6 heterodimeric binding and non-homologous end joining (NHEJ) repair activities induced by ionizing radiation (IR). Interacts with PLK1; this interaction occurs during the early mitotic period, increases upon heat shock but does not modulate neither HSF1 homotrimerization and DNA-binding activities. Interacts (via Ser-216 phosphorylated form) with CDC20; this interaction occurs in mitosis in a MAD2L1-dependent manner and prevents PLK1-stimulated degradation of HSF1 by blocking the recruitment of the SCF(BTRC) ubiquitin ligase complex. Interacts with MAD2L1; this interaction occurs in mitosis. Interacts with BTRC; this interaction occurs during mitosis, induces its ubiquitin-dependent degradation following stimulus-dependent phosphorylation at Ser-216, a process inhibited by CDC20. Interacts with HSP90AA1 and HSP90AB1. Forms a complex with TTC5/STRAP and p300/EP300; these interactions augment chromatin-bound HSF1 and p300/EP300 histone acetyltransferase activity. In terms of processing, phosphorylated. Phosphorylated in unstressed cells; this phosphorylation is constitutive and implicated in the repression of HSF1 transcriptional activity. Phosphorylated on Ser-121 by MAPKAPK2; this phosphorylation promotes interaction with HSP90 proteins and inhibits HSF1 homotrimerization, DNA-binding and transactivation activities. Phosphorylation on Ser-303 by GSK3B/GSK3-beta and on Ser-307 by MAPK3 within the regulatory domain is involved in the repression of HSF1 transcriptional activity and occurs in a RAF1-dependent manner. Phosphorylation on Ser-303 and Ser-307 increases HSF1 nuclear export in a YWHAE- and XPO1/CRM1-dependent manner. Phosphorylation on Ser-307 is a prerequisite for phosphorylation on Ser-303. According to PubMed:9535852, Ser-303 is not phosphorylated in unstressed cells. Phosphorylated on Ser-419 by PLK1; phosphorylation promotes nuclear translocation upon heat shock. Hyperphosphorylated upon heat shock and during the attenuation and recovery phase period of the heat shock response. Phosphorylated on Thr-142; this phosphorylation increases HSF1 transactivation activity upon heat shock. Phosphorylation on Ser-230 by CAMK2A; this phosphorylation enhances HSF1 transactivation activity upon heat shock. Phosphorylation on Ser-326 by MAPK12; this phosphorylation enhances HSF1 nuclear translocation, homotrimerization and transactivation activities upon heat shock. Phosphorylated on Ser-320 by PRKACA/PKA; this phosphorylation promotes nuclear localization and transcriptional activity upon heat shock. Phosphorylated on Ser-363 by MAPK8; this phosphorylation occurs upon heat shock, induces HSF1 translocation into nuclear stress bodies and negatively regulates transactivation activity. Neither basal nor stress-inducible phosphorylation on Ser-230, Ser-292, Ser-303, Ser-307, Ser-314, Ser-319, Ser-320, Thr-323, Ser-326, Ser-338, Ser-344, Ser-363, Thr-367, Ser-368 and Thr-369 within the regulatory domain is involved in the regulation of HSF1 subcellular localization or DNA-binding activity; however, it negatively regulates HSF1 transactivation activity. Phosphorylated on Ser-216 by PLK1 in the early mitotic period; this phosphorylation regulates HSF1 localization to the spindle pole, the recruitment of the SCF(BTRC) ubiquitin ligase complex inducing HSF1 degradation, and hence mitotic progression. Dephosphorylated on Ser-121, Ser-307, Ser-314, Thr-323 and Thr-367 by phosphatase PPP2CA in an IER5-dependent manner, leading to HSF1-mediated transactivation activity. Sumoylated with SUMO1 and SUMO2 upon heat shock in a ERK2-dependent manner. Sumoylated by SUMO1 on Lys-298; sumoylation occurs upon heat shock and promotes its localization to nuclear stress bodies and DNA-binding activity. Phosphorylation on Ser-303 and Ser-307 is probably a prerequisite for sumoylation. Post-translationally, acetylated on Lys-118; this acetylation is decreased in a IER5-dependent manner. Acetylated on Lys-118, Lys-208 and Lys-298; these acetylations occur in a EP300-dependent manner. Acetylated on Lys-80; this acetylation inhibits DNA-binding activity upon heat shock. Deacetylated on Lys-80 by SIRT1; this deacetylation increases DNA-binding activity. In terms of processing, ubiquitinated by SCF(BTRC) and degraded following stimulus-dependent phosphorylation at Ser-216 by PLK1 in mitosis. Polyubiquitinated. Undergoes proteasomal degradation upon heat shock and during the attenuation and recovery phase period of the heat shock response.

The protein resides in the nucleus. The protein localises to the cytoplasm. Its subcellular location is the nucleoplasm. It is found in the perinuclear region. It localises to the cytoskeleton. The protein resides in the spindle pole. The protein localises to the microtubule organizing center. Its subcellular location is the centrosome. It is found in the chromosome. It localises to the centromere. The protein resides in the kinetochore. In terms of biological role, functions as a stress-inducible and DNA-binding transcription factor that plays a central role in the transcriptional activation of the heat shock response (HSR), leading to the expression of a large class of molecular chaperones, heat shock proteins (HSPs), that protect cells from cellular insult damage. In unstressed cells, is present in a HSP90-containing multichaperone complex that maintains it in a non-DNA-binding inactivated monomeric form. Upon exposure to heat and other stress stimuli, undergoes homotrimerization and activates HSP gene transcription through binding to site-specific heat shock elements (HSEs) present in the promoter regions of HSP genes. Upon heat shock stress, forms a chromatin-associated complex with TTC5/STRAP and p300/EP300 to stimulate HSR transcription, therefore increasing cell survival. Activation is reversible, and during the attenuation and recovery phase period of the HSR, returns to its unactivated form. Binds to inverted 5'-NGAAN-3' pentamer DNA sequences. Binds to chromatin at heat shock gene promoters. Activates transcription of transcription factor FOXR1 which in turn activates transcription of the heat shock chaperones HSPA1A and HSPA6 and the antioxidant NADPH-dependent reductase DHRS2. Also serves several other functions independently of its transcriptional activity. Involved in the repression of Ras-induced transcriptional activation of the c-fos gene in heat-stressed cells. Positively regulates pre-mRNA 3'-end processing and polyadenylation of HSP70 mRNA upon heat-stressed cells in a symplekin (SYMPK)-dependent manner. Plays a role in nuclear export of stress-induced HSP70 mRNA. Plays a role in the regulation of mitotic progression. Also plays a role as a negative regulator of non-homologous end joining (NHEJ) repair activity in a DNA damage-dependent manner. Involved in stress-induced cancer cell proliferation in a IER5-dependent manner. Functionally, (Microbial infection) Plays a role in latent human immunodeficiency virus (HIV-1) transcriptional reactivation. Binds to the HIV-1 long terminal repeat promoter (LTR) to reactivate viral transcription by recruiting cellular transcriptional elongation factors, such as CDK9, CCNT1 and EP300. The protein is Heat shock factor protein 1 of Homo sapiens (Human).